Reading from the N-terminus, the 156-residue chain is Deoxyuridine 5'-triphosphate nucleotidohydrolase (156 aa).

Substrate contacts are provided by residues 76–78, asparagine 89, 93–95, and lysine 103; these read RSG and TVD.

It belongs to the dUTPase family. Mg(2+) is required as a cofactor.

It catalyses the reaction dUTP + H2O = dUMP + diphosphate + H(+). It functions in the pathway pyrimidine metabolism; dUMP biosynthesis; dUMP from dCTP (dUTP route): step 2/2. Its function is as follows. This enzyme is involved in nucleotide metabolism: it produces dUMP, the immediate precursor of thymidine nucleotides and it decreases the intracellular concentration of dUTP so that uracil cannot be incorporated into DNA. This Rhizobium leguminosarum bv. trifolii (strain WSM2304) protein is Deoxyuridine 5'-triphosphate nucleotidohydrolase.